Here is a 138-residue protein sequence, read N- to C-terminus: MLQPKRRKYRKEQKGRNTGKATRGNAVSFGEFGLKAIGRGRLTARQIEAARRAMTRHIKRGGRIWIRIFPDKPISQKPAEVRMGNGKGNPEYYVAEIQPGKMLYEMDGVSEELAREAFRLAAAKLPIQTTFIVRQLGA.

Basic residues predominate over residues 1-13; it reads MLQPKRRKYRKEQ. Residues 1-24 form a disordered region; it reads MLQPKRRKYRKEQKGRNTGKATRG.

This sequence belongs to the universal ribosomal protein uL16 family. As to quaternary structure, part of the 50S ribosomal subunit.

Binds 23S rRNA and is also seen to make contacts with the A and possibly P site tRNAs. In Burkholderia multivorans (strain ATCC 17616 / 249), this protein is Large ribosomal subunit protein uL16.